The following is a 545-amino-acid chain: Thermosome subunit alpha (545 aa).

The protein belongs to the TCP-1 chaperonin family. Forms a Heterooligomeric complex of two stacked eight-membered rings.

Its function is as follows. Molecular chaperone; binds unfolded polypeptides in vitro, and has a weak ATPase activity. The sequence is that of Thermosome subunit alpha (thsA) from Archaeoglobus fulgidus (strain ATCC 49558 / DSM 4304 / JCM 9628 / NBRC 100126 / VC-16).